We begin with the raw amino-acid sequence, 842 residues long: Protein P (842 aa).

Residues 1–177 (MPLSYQHFRR…FCGSPYTWEQ (177 aa)) are terminal protein domain (TP). The spacer stretch occupies residues 178 to 345 (DLQHGAFLDG…YCLSHLVNLL (168 aa)). The tract at residues 184–238 (FLDGPSRVGKEPFHQQSSRIPSRSPVGPSIQSKYQQSRLGLQSQKGPLARGQQGR) is disordered. The segment covering 212–228 (SIQSKYQQSRLGLQSQK) has biased composition (polar residues). The interval 346 to 689 (QDWGPCTEHG…YMNLYPVARQ (344 aa)) is polymerase/reverse transcriptase domain (RT). The region spanning 356–599 (EYHIRIPRTP…YSLNFMGYVI (244 aa)) is the Reverse transcriptase domain. Residues Asp428, Asp550, and Asp551 each contribute to the Mg(2+) site.

Belongs to the hepadnaviridae P protein family.

The enzyme catalyses DNA(n) + a 2'-deoxyribonucleoside 5'-triphosphate = DNA(n+1) + diphosphate. It carries out the reaction Endonucleolytic cleavage to 5'-phosphomonoester.. With respect to regulation, activated by host HSP70 and HSP40 in vitro to be able to bind the epsilon loop of the pgRNA. Because deletion of the RNase H region renders the protein partly chaperone-independent, the chaperones may be needed indirectly to relieve occlusion of the RNA-binding site by this domain. Inhibited by several reverse-transcriptase inhibitors: Lamivudine, Adefovir and Entecavir. Its function is as follows. Multifunctional enzyme that converts the viral RNA genome into dsDNA in viral cytoplasmic capsids. This enzyme displays a DNA polymerase activity that can copy either DNA or RNA templates, and a ribonuclease H (RNase H) activity that cleaves the RNA strand of RNA-DNA heteroduplexes in a partially processive 3'- to 5'-endonucleasic mode. Neo-synthesized pregenomic RNA (pgRNA) are encapsidated together with the P protein, and reverse-transcribed inside the nucleocapsid. Initiation of reverse-transcription occurs first by binding the epsilon loop on the pgRNA genome, and is initiated by protein priming, thereby the 5'-end of (-)DNA is covalently linked to P protein. Partial (+)DNA is synthesized from the (-)DNA template and generates the relaxed circular DNA (RC-DNA) genome. After budding and infection, the RC-DNA migrates in the nucleus, and is converted into a plasmid-like covalently closed circular DNA (cccDNA). The activity of P protein does not seem to be necessary for cccDNA generation, and is presumably released from (+)DNA by host nuclear DNA repair machinery. The sequence is that of Protein P from Hepatitis B virus genotype G (isolate United States/USG17/2002) (HBV-G).